Reading from the N-terminus, the 212-residue chain is 2-C-methyl-D-erythritol 4-phosphate cytidylyltransferase (212 aa).

The protein belongs to the IspD/TarI cytidylyltransferase family. IspD subfamily.

It carries out the reaction 2-C-methyl-D-erythritol 4-phosphate + CTP + H(+) = 4-CDP-2-C-methyl-D-erythritol + diphosphate. The protein operates within isoprenoid biosynthesis; isopentenyl diphosphate biosynthesis via DXP pathway; isopentenyl diphosphate from 1-deoxy-D-xylulose 5-phosphate: step 2/6. Its function is as follows. Catalyzes the formation of 4-diphosphocytidyl-2-C-methyl-D-erythritol from CTP and 2-C-methyl-D-erythritol 4-phosphate (MEP). The polypeptide is 2-C-methyl-D-erythritol 4-phosphate cytidylyltransferase (Chlamydia felis (strain Fe/C-56) (Chlamydophila felis)).